Here is a 536-residue protein sequence, read N- to C-terminus: Organic anion transporter 3 (536 aa).

Over 1–11 (MTFSEILDRVG) the chain is Cytoplasmic. Ser-4 carries the post-translational modification Phosphoserine. The helical transmembrane segment at 12–32 (SMGPFQYLHVTLLALPVLGIA) threads the bilayer. Topologically, residues 33 to 123 (NHNLLQIFTA…LVCSSNKLKE (91 aa)) are extracellular. N-linked (GlcNAc...) asparagine glycosylation is found at Asn-81 and Asn-86. Residues 124–144 (MAQSIFMAGILVGGPVIGELS) traverse the membrane as a helical segment. The Cytoplasmic portion of the chain corresponds to 145–158 (DRFGRKPILTWSYL). The helical transmembrane segment at 159–179 (MLAASGSGAAFSPSLPVYMIF) threads the bilayer. Residue Arg-180 is a topological domain, extracellular. A helical transmembrane segment spans residues 181 to 201 (FLCGCSISGISLSTVILNVEW). Over 202–212 (VPTSMRAISST) the chain is Cytoplasmic. A helical transmembrane segment spans residues 213-233 (SIGYCYTIGQFILSGLAYAIP). The Extracellular segment spans residues 234 to 236 (QWR). The chain crosses the membrane as a helical span at residues 237–257 (WLQLTSSAPFFIFSLLSWWVP). Topologically, residues 258-327 (ESIRWLVLSG…FRVSILRRVT (70 aa)) are cytoplasmic. Residues 328-348 (FCLSLAWFSTGFAYYSLAMGV) traverse the membrane as a helical segment. The Extracellular segment spans residues 349 to 354 (EEFGVN). Residues 355 to 375 (IYILQIIFGGVDIPAKFITIL) form a helical membrane-spanning segment. Residues 376-383 (SLSYLGRR) are Cytoplasmic-facing. Residues 384–404 (ITQSFLLLLAGGAILALIFVP) form a helical membrane-spanning segment. Residues 405–411 (SEMQLLR) are Extracellular-facing. The chain crosses the membrane as a helical span at residues 412-432 (TALAVFGKGCLSGSFSCLFLY). Residues 433 to 471 (TSELYPTVLRQTGMGISNVWARVGSMIAPLVKITGELQP) lie on the Cytoplasmic side of the membrane. The chain crosses the membrane as a helical span at residues 472-492 (FIPNVIFGTTALLGGSAAFFL). The Extracellular segment spans residues 493 to 536 (LETLNRPLPETIEDIQNWHKQVQKTKQESEAEKASQIIPLKTGG). The interval 515–536 (QKTKQESEAEKASQIIPLKTGG) is disordered.

This sequence belongs to the major facilitator (TC 2.A.1) superfamily. Organic cation transporter (TC 2.A.1.19) family. Expressed in the liver, brain, kidney, choroid plexus and weakly in the eye. Moderately expressed (at protein level) in the brain capillary endothelial cells (BCEC).

The protein resides in the basolateral cell membrane. The catalysed reaction is estrone 3-sulfate(out) + glutarate(in) = estrone 3-sulfate(in) + glutarate(out). It carries out the reaction estrone 3-sulfate(in) + 2-oxoglutarate(out) = estrone 3-sulfate(out) + 2-oxoglutarate(in). The enzyme catalyses glutarate(in) + 2-oxoglutarate(out) = glutarate(out) + 2-oxoglutarate(in). It catalyses the reaction urate(in) + 2-oxoglutarate(out) = urate(out) + 2-oxoglutarate(in). The catalysed reaction is taurocholate(out) + glutarate(in) = taurocholate(in) + glutarate(out). It carries out the reaction dehydroepiandrosterone 3-sulfate(out) + glutarate(in) = dehydroepiandrosterone 3-sulfate(in) + glutarate(out). The enzyme catalyses prostaglandin F2alpha(out) + glutarate(in) = prostaglandin F2alpha(in) + glutarate(out). It catalyses the reaction prostaglandin F2alpha(out) + 2-oxoglutarate(in) = prostaglandin F2alpha(in) + 2-oxoglutarate(out). The catalysed reaction is (R)-carnitine(out) + 2-oxoglutarate(in) = (R)-carnitine(in) + 2-oxoglutarate(out). It carries out the reaction glutarate(in) + (R)-carnitine(out) = glutarate(out) + (R)-carnitine(in). The enzyme catalyses prostaglandin E2(out) + 2-oxoglutarate(in) = prostaglandin E2(in) + 2-oxoglutarate(out). It catalyses the reaction prostaglandin E2(out) + glutarate(in) = prostaglandin E2(in) + glutarate(out). The catalysed reaction is urate(in) + glutarate(out) = urate(out) + glutarate(in). It carries out the reaction taurocholate(out) + 2-oxoglutarate(in) = taurocholate(in) + 2-oxoglutarate(out). The enzyme catalyses dehydroepiandrosterone 3-sulfate(out) + 2-oxoglutarate(in) = dehydroepiandrosterone 3-sulfate(in) + 2-oxoglutarate(out). It catalyses the reaction kynurenate(out) + a dicarboxylate(in) = kynurenate(in) + a dicarboxylate(out). The catalysed reaction is (indol-3-yl)acetate(out) + a dicarboxylate(in) = (indol-3-yl)acetate(in) + a dicarboxylate(out). It carries out the reaction indoxyl sulfate(out) + a dicarboxylate(in) = indoxyl sulfate(in) + a dicarboxylate(out). The enzyme catalyses N-benzoylglycine(out) + a dicarboxylate(in) = N-benzoylglycine(in) + a dicarboxylate(out). It catalyses the reaction 3-carboxy-4-methyl-5-propyl-2-furanpropanoate(out) + a dicarboxylate(in) = 3-carboxy-4-methyl-5-propyl-2-furanpropanoate(in) + a dicarboxylate(out). The catalysed reaction is (6R)-L-erythro-5,6,7,8-tetrahydrobiopterin(out) + a dicarboxylate(in) = (6R)-L-erythro-5,6,7,8-tetrahydrobiopterin(in) + a dicarboxylate(out). It carries out the reaction L-erythro-7,8-dihydrobiopterin(out) + a dicarboxylate(in) = L-erythro-7,8-dihydrobiopterin(in) + a dicarboxylate(out). The enzyme catalyses L-sepiapterin(out) + a dicarboxylate(in) = L-sepiapterin(in) + a dicarboxylate(out). Its function is as follows. Functions as an organic anion/dicarboxylate exchanger that couples organic anion uptake indirectly to the sodium gradient. Transports organic anions such as estrone 3-sulfate (E1S) and urate in exchange for dicarboxylates such as glutarate or ketoglutarate (2-oxoglutarate). Plays an important role in the excretion of endogenous and exogenous organic anions, especially from the kidney and the brain. E1S transport is pH- and chloride-dependent and may also involve E1S/cGMP exchange. Responsible for the transport of prostaglandin E2 (PGE2) and prostaglandin F2(alpha) (PGF2(alpha)) in the basolateral side of the renal tubule. Involved in the transport of neuroactive tryptophan metabolites kynurenate and xanthurenate. Functions as a biopterin transporters involved in the uptake and the secretion of coenzymes tetrahydrobiopterin (BH4), dihydrobiopterin (BH2) and sepiapterin to urine, thereby determining baseline levels of blood biopterins. May be involved in the basolateral transport of steviol, a metabolite of the popular sugar substitute stevioside. May participate in the detoxification/ renal excretion of drugs and xenobiotics, such as the histamine H(2)-receptor antagonists fexofenadine and cimetidine, the antibiotic benzylpenicillin (PCG), the anionic herbicide 2,4-dichloro-phenoxyacetate (2,4-D), the diagnostic agent p-aminohippurate (PAH), the antiviral acyclovir (ACV), and the mycotoxin ochratoxin (OTA), by transporting these exogenous organic anions across the cell membrane in exchange for dicarboxylates such as 2-oxoglutarate. Contributes to the renal uptake of potent uremic toxins (indoxyl sulfate (IS), indole acetate (IA), hippurate/N-benzoylglycine (HA) and 3-carboxy-4-methyl-5-propyl-2-furanpropionate (CMPF)), pravastatin, PCG, E1S and dehydroepiandrosterone sulfate (DHEAS), and is partly involved in the renal uptake of temocaprilat (an angiotensin-converting enzyme (ACE) inhibitor). May contribute to the release of cortisol in the adrenals. Involved in one of the detoxification systems on the choroid plexus (CP), removes substrates such as E1S or taurocholate (TC), PCG, 2,4-D and PAH, from the cerebrospinal fluid (CSF) to the blood for eventual excretion in urine and bile. Regulates the CSF concentration of histamine H(2)-receptor antagonists cimetidine and ranitidine at the CP. Also contributes to the uptake of several other organic compounds such as the prostanoids prostaglandin E(2) and prostaglandin F(2-alpha), L-carnitine, and the therapeutic drugs allopurinol, 6-mercaptopurine (6-MP) and 5-fluorouracil (5-FU). Mediates the uptake from brain of organic anions, such as E1S, PAH, and OTA. Mediates the transport of PAH, PCG, and the statins pravastatin and pitavastatin, from the cerebrum into the blood circulation across the blood-brain barrier (BBB). In summary, plays a role in the efflux of drugs and xenobiotics, helping reduce their undesired toxicological effects on the body. This is Organic anion transporter 3 (Slc22a8) from Rattus norvegicus (Rat).